A 187-amino-acid chain; its full sequence is Adenylate kinase (187 aa).

12 to 17 (GAGKGT) contacts ATP. Residues 32 to 61 (STGDIFRANLAENTELGQKARQFMDAGDLV) form an NMP region. Residues Thr-33, Arg-38, 59–61 (DLV), 87–90 (GYPR), and Gln-94 each bind AMP. The segment at 128 to 134 (GRGRADD) is LID. Arg-129 provides a ligand contact to ATP. Residues Arg-131 and Arg-142 each coordinate AMP. Arg-170 contacts ATP.

Belongs to the adenylate kinase family. As to quaternary structure, monomer.

It localises to the cytoplasm. The enzyme catalyses AMP + ATP = 2 ADP. It functions in the pathway purine metabolism; AMP biosynthesis via salvage pathway; AMP from ADP: step 1/1. Functionally, catalyzes the reversible transfer of the terminal phosphate group between ATP and AMP. Plays an important role in cellular energy homeostasis and in adenine nucleotide metabolism. The chain is Adenylate kinase from Leuconostoc mesenteroides subsp. mesenteroides (strain ATCC 8293 / DSM 20343 / BCRC 11652 / CCM 1803 / JCM 6124 / NCDO 523 / NBRC 100496 / NCIMB 8023 / NCTC 12954 / NRRL B-1118 / 37Y).